Here is a 489-residue protein sequence, read N- to C-terminus: tRNA(Ile)-lysidine synthase (489 aa).

35–40 (SGGLDS) contacts ATP.

This sequence belongs to the tRNA(Ile)-lysidine synthase family.

The protein localises to the cytoplasm. The enzyme catalyses cytidine(34) in tRNA(Ile2) + L-lysine + ATP = lysidine(34) in tRNA(Ile2) + AMP + diphosphate + H(+). In terms of biological role, ligates lysine onto the cytidine present at position 34 of the AUA codon-specific tRNA(Ile) that contains the anticodon CAU, in an ATP-dependent manner. Cytidine is converted to lysidine, thus changing the amino acid specificity of the tRNA from methionine to isoleucine. The protein is tRNA(Ile)-lysidine synthase of Burkholderia mallei (strain ATCC 23344).